The sequence spans 149 residues: Large ribosomal subunit protein bL9 (149 aa).

It belongs to the bacterial ribosomal protein bL9 family.

Binds to the 23S rRNA. In Chromobacterium violaceum (strain ATCC 12472 / DSM 30191 / JCM 1249 / CCUG 213 / NBRC 12614 / NCIMB 9131 / NCTC 9757 / MK), this protein is Large ribosomal subunit protein bL9.